A 332-amino-acid chain; its full sequence is Autoinducer 2 import system permease protein LsrD (332 aa).

7 helical membrane passes run 5 to 25, 43 to 63, 83 to 103, 116 to 136, 160 to 180, 210 to 230, and 259 to 279; these read LNWESALLALLIAEILLFGAL, ICIGIVALPLTLVIISGGIDI, GWPLWLAVSLTLLLGLLCGLF, LVITLGTLYLYGGGALLLSGM, LGGLPLPLVLFAIITFFFWLL, IPYVLYGLVGVASAVAALVMV, and IYGGSGSILGTALAALLVGYL.

This sequence belongs to the binding-protein-dependent transport system permease family. AraH/RbsC subfamily. In terms of assembly, the complex is composed of two ATP-binding proteins (LsrA), two transmembrane proteins (LsrC and LsrD) and a solute-binding protein (LsrB).

The protein resides in the cell inner membrane. Functionally, part of the ABC transporter complex LsrABCD involved in autoinducer 2 (AI-2) import. Probably responsible for the translocation of the substrate across the membrane. This chain is Autoinducer 2 import system permease protein LsrD (lsrD), found in Klebsiella pneumoniae subsp. pneumoniae (strain ATCC 700721 / MGH 78578).